A 335-amino-acid chain; its full sequence is Transcription factor E2F5 (335 aa).

The segment covering 1 to 18 (MAAAEPTSSAQPTPQAQA) has biased composition (low complexity). The tract at residues 1-40 (MAAAEPTSSAQPTPQAQAQPPPHGAPSSQPSAALAGGSSR) is disordered. Residues 37 to 108 (GSSRHEKSLG…KNSIQWKGVG (72 aa)) mediate DNA binding. The segment at 66–88 (LKAAADTLAVRQKRRIYDITNVL) is leucine-zipper. The DEF box signature appears at 71 to 108 (DTLAVRQKRRIYDITNVLEGIDLIEKKSKNSIQWKGVG). The tract at residues 109–205 (AGCNTKEVID…GQNGQKKYQI (97 aa)) is dimerization. Positions 226-285 (SKPVVFPVPPPDDLTQPSSQSSTSVTPQKSTMAAQNLPEQHVSERSQTFQQTPAAEVSSG) are disordered. Positions 238 to 256 (DLTQPSSQSSTSVTPQKST) are enriched in low complexity. The tract at residues 277-335 (TPAAEVSSGSISGDIIDELMSSDVFPLLRLSPTPADDYNFNLDDNEGVCDLFDVQILNY) is transactivation. Positions 312–329 (DDYNFNLDDNEGVCDLFD) are RBL2 association.

Belongs to the E2F/DP family. As to quaternary structure, component of the DRTF1/E2F transcription factor complex. Binds cooperatively with DP-1 to E2F sites. Interaction with retinoblastoma protein RB1 or proteins RBL1 and RBL2 inhibits the E2F transactivation domain. Component of the DREAM complex (also named LINC complex) at least composed of E2F4, E2F5, LIN9, LIN37, LIN52, LIN54, MYBL1, MYBL2, RBL1, RBL2, RBBP4, TFDP1 and TFDP2. The complex exists in quiescent cells where it represses cell cycle-dependent genes. It dissociates in S phase when LIN9, LIN37, LIN52 and LIN54 form a subcomplex that binds to MYBL2.

It is found in the nucleus. Transcriptional activator that binds to E2F sites, these sites are present in the promoter of many genes whose products are involved in cell proliferation. May mediate growth factor-initiated signal transduction. It is likely involved in the early responses of resting cells to growth factor stimulation. Specifically required for multiciliate cell differentiation: together with MCIDAS and E2F5, binds and activate genes required for centriole biogenesis. This Mus musculus (Mouse) protein is Transcription factor E2F5 (E2f5).